Consider the following 362-residue polypeptide: Phosphoserine aminotransferase (362 aa).

L-glutamate contacts are provided by serine 9 and arginine 42. Pyridoxal 5'-phosphate contacts are provided by residues 76-77 (AR), tryptophan 102, threonine 153, aspartate 174, and glutamine 197. An N6-(pyridoxal phosphate)lysine modification is found at lysine 198. 239–240 (NT) contacts pyridoxal 5'-phosphate.

This sequence belongs to the class-V pyridoxal-phosphate-dependent aminotransferase family. SerC subfamily. As to quaternary structure, homodimer. It depends on pyridoxal 5'-phosphate as a cofactor.

It is found in the cytoplasm. It catalyses the reaction O-phospho-L-serine + 2-oxoglutarate = 3-phosphooxypyruvate + L-glutamate. The enzyme catalyses 4-(phosphooxy)-L-threonine + 2-oxoglutarate = (R)-3-hydroxy-2-oxo-4-phosphooxybutanoate + L-glutamate. Its pathway is amino-acid biosynthesis; L-serine biosynthesis; L-serine from 3-phospho-D-glycerate: step 2/3. The protein operates within cofactor biosynthesis; pyridoxine 5'-phosphate biosynthesis; pyridoxine 5'-phosphate from D-erythrose 4-phosphate: step 3/5. Functionally, catalyzes the reversible conversion of 3-phosphohydroxypyruvate to phosphoserine and of 3-hydroxy-2-oxo-4-phosphonooxybutanoate to phosphohydroxythreonine. This is Phosphoserine aminotransferase from Photorhabdus laumondii subsp. laumondii (strain DSM 15139 / CIP 105565 / TT01) (Photorhabdus luminescens subsp. laumondii).